The chain runs to 230 residues: Porin OmpL (230 aa).

The signal sequence occupies residues 1-20 (MKKINAIILLSSLTSASVFA).

Belongs to the oligogalacturonate-specific porin KdgM (TC 1.B.35) family. OmpL subfamily.

It localises to the cell outer membrane. Functionally, outer membrane channel protein that allows an efficient diffusion of low-molecular-weight solutes such as small sugars and tetraglycine. However, the specific substrate recognized by the OmpL channel is unknown. The protein is Porin OmpL (ompL) of Escherichia coli (strain K12).